We begin with the raw amino-acid sequence, 291 residues long: G1/S-specific cyclin-D2 (291 aa).

The segment at 261–291 (TRQQTQQRNSSKSVDELDQASTPTDVQDINL) is disordered. The span at 279 to 291 (QASTPTDVQDINL) shows a compositional bias: polar residues. T282 is modified (phosphothreonine).

Belongs to the cyclin family. Cyclin D subfamily. In terms of assembly, interacts with the cdk4 and cdk6 protein kinases to form a serine/threonine kinase holoenzyme complex. The cyclin subunit imparts substrate specificity to the complex. In terms of processing, phosphorylation at Thr-282 by MAP kinases is required for ubiquitination and degradation by the DCX(AMBRA1) complex. Post-translationally, ubiquitinated by the DCX(AMBRA1) complex during the transition from G1 to S cell phase, leading to its degradation: ubiquitination is dependent on Thr-282 phosphorylation. The DCX(AMBRA1) complex represents the major regulator of CCND2 stability during the G1/S transition.

The protein localises to the nucleus. It is found in the cytoplasm. The protein resides in the nucleus membrane. Regulatory component of the cyclin D2-CDK4 (DC) complex that phosphorylates and inhibits members of the retinoblastoma (RB) protein family including RB1 and regulates the cell-cycle during G(1)/S transition. Phosphorylation of RB1 allows dissociation of the transcription factor E2F from the RB/E2F complex and the subsequent transcription of E2F target genes which are responsible for the progression through the G(1) phase. Hypophosphorylates RB1 in early G(1) phase. Cyclin D-CDK4 complexes are major integrators of various mitogenenic and antimitogenic signals. The chain is G1/S-specific cyclin-D2 (ccnd2) from Xenopus laevis (African clawed frog).